The following is a 156-amino-acid chain: Ribosomal RNA large subunit methyltransferase H (156 aa).

S-adenosyl-L-methionine contacts are provided by residues Leu73, Gly104, and 123 to 128; that span reads LSKLTL.

The protein belongs to the RNA methyltransferase RlmH family. Homodimer.

It is found in the cytoplasm. It carries out the reaction pseudouridine(1915) in 23S rRNA + S-adenosyl-L-methionine = N(3)-methylpseudouridine(1915) in 23S rRNA + S-adenosyl-L-homocysteine + H(+). Functionally, specifically methylates the pseudouridine at position 1915 (m3Psi1915) in 23S rRNA. The chain is Ribosomal RNA large subunit methyltransferase H from Hydrogenovibrio crunogenus (strain DSM 25203 / XCL-2) (Thiomicrospira crunogena).